Reading from the N-terminus, the 557-residue chain is Putative UDP-glucuronate:xylan alpha-glucuronosyltransferase 4 (557 aa).

A helical; Signal-anchor for type II membrane protein transmembrane segment spans residues Lys11–Phe31. Residues Asp365 and Asp367 each contribute to the Mn(2+) site. Residues Asp365 to Asp367, Asn394 to Gly396, Asn421 to Gln425, and His466 to Lys471 contribute to the substrate site. His466 serves as a coordination point for Mn(2+).

This sequence belongs to the glycosyltransferase 8 family. Glycogenin subfamily. The cofactor is Mn(2+).

The protein localises to the golgi apparatus membrane. Its function is as follows. May be involved in the substitutions of the xylan backbone in stem glucuronoxylan. The chain is Putative UDP-glucuronate:xylan alpha-glucuronosyltransferase 4 (GUX4) from Arabidopsis thaliana (Mouse-ear cress).